A 244-amino-acid polypeptide reads, in one-letter code: Probable transcriptional regulatory protein Xfasm12_1059 (244 aa).

The protein belongs to the TACO1 family.

It localises to the cytoplasm. The protein is Probable transcriptional regulatory protein Xfasm12_1059 of Xylella fastidiosa (strain M12).